The sequence spans 62 residues: Large ribosomal subunit protein bL28 (62 aa).

Belongs to the bacterial ribosomal protein bL28 family.

The sequence is that of Large ribosomal subunit protein bL28 from Moorella thermoacetica (strain ATCC 39073 / JCM 9320).